A 775-amino-acid chain; its full sequence is MSCPHLTETNVVIPDNSQVIYREECVRCFNSQDEEGGIDLCLTCFQSGCGETGLKHSLVHFEQTLHPIVVTIARQPKQKINDEPPQKITKLEIREDSDEDLYDYFYVPKCLVCNIILDIQDPLLSLSLEAMKNATKASNKSQLTAWENELTTCDHIINLPENETYVTNLDNATCSKCDLAENLWMCLTCGALSCGRKQYGGGGGNGHALSHYDDTGHPLAVKLKSISPDGQADIYCYSCDEERIDPNIKTHMLNFGIDIAKLNKTEKSLAELQLEQNLNWDFGASEEDDASKRLFGPGLTGLKNLGNSCYLASTMQSLFSIKEFAIHELNLFNTYNSVCQTPTTDLQCQLGKLADGLVSGKFSKPSKIGLLNNPSSSILPYQDGLRPFMFKDVVGQGHSEFGTSQQQDAYEFLLYLLGKIRKSSIAKTDITKIFDFETEQKLSCLSCKRVRYSSFSSQGLTLTVPRVKIGEIEGEQIYEEVSIDQCLDATIQPDQMEYTCEACKSKLGATTTTAMKSFPKVLILQANRFDLQGYQVKKLSIPIIVNEDGIYNFDRLMAKDHPNDEDYLPEKTETIEWNQSAIEQLQAMGFPLVRCQRALLATGNSDTETAMNWLFEHMEDPEIDKPIEVSELLPKADSSVSEENVQSLCEFGFTVAQARKGLLESNNNIERAVDWILNHPDESFEEPPLEGSDSSIKNENMGSWESTNVPVNYNLKAIISHKGSSAHAGHYVAFIRKEIDGKQQWVLFNDEKVLQVASLEEAKTTGYVYLFERLD.

The segment at 1-108 (MSCPHLTETN…EDLYDYFYVP (108 aa)) adopts a UBP-type 1; degenerate zinc-finger fold. 20 residues coordinate Zn(2+): Cys-25, Cys-28, Cys-41, Cys-44, Cys-49, His-56, His-60, His-66, Cys-153, His-155, Cys-174, Cys-177, Cys-186, Cys-189, Cys-194, His-207, His-211, His-217, Cys-236, and Cys-239. The UBP-type 2 zinc-finger motif lies at 151–259 (TTCDHIINLP…THMLNFGIDI (109 aa)). A USP domain is found at 300–774 (TGLKNLGNSC…TGYVYLFERL (475 aa)). Cys-309 functions as the Nucleophile in the catalytic mechanism. Ser-456 is subject to Phosphoserine. 2 consecutive UBA domains span residues 576 to 617 (EWNQ…LFEH) and 639 to 679 (SVSE…ILNH). The Proton acceptor role is filled by His-730.

The protein belongs to the peptidase C19 family.

It carries out the reaction Thiol-dependent hydrolysis of ester, thioester, amide, peptide and isopeptide bonds formed by the C-terminal Gly of ubiquitin (a 76-residue protein attached to proteins as an intracellular targeting signal).. This Schizosaccharomyces pombe (strain 972 / ATCC 24843) (Fission yeast) protein is Ubiquitin carboxyl-terminal hydrolase 14 (ubp14).